Reading from the N-terminus, the 377-residue chain is Meiotic driver cw9 (377 aa).

2 disordered regions span residues 1 to 49 (MKNK…DLNN) and 64 to 100 (NKSTTPPDYDENRLPITDEGNNPPNTHRENHSSGTTD). Residues 11–29 (SMDEMSAKNDNEIDLEKGP) are compositionally biased toward basic and acidic residues. A run of 7 helical transmembrane segments spans residues 105–125 (FLIKLLISFTSIILFNAPAVC), 142–162 (WTLFGFWCLVCTLALLFLTYF), 172–192 (VTIIFLAQCIKVTAVFLAQCV), 218–238 (VVIIWLLWVVICYTLFLRSKF), 252–272 (CSISAALLLFLLYVRLPFWTL), 276–296 (FSGLFQVLGVQSCVVIVTKGL), and 306–326 (ATGYEIEVSSLFVIGNFLFFY).

It belongs to the WTF family. In terms of assembly, homomer. Forms protein aggregates. The two isoforms can interact with each other and with themselves. High sequence similarity is required for their interaction.

The protein resides in the spore membrane. The protein localises to the vacuole membrane. Its subcellular location is the ascus epiplasm. It localises to the cytoplasm. It is found in the endoplasmic reticulum membrane. Promotes unequal transmission of alleles from the parental zygote to progeny spores by acting as poison/antidote system where the poison and antidote proteins are produced from the same locus; the poison component is trans-acting and targets all spores within an ascus whereas the antidote component is spore-specific, leading to poisoning of all progeny that do not inherit the allele. Its function is as follows. Localizes isoform 2 to the vacuole thereby facilitating its degradation. Functionally, forms toxic aggregates that disrupt spore maturation. This Schizosaccharomyces pombe (Fission yeast) protein is Meiotic driver cw9.